A 61-amino-acid chain; its full sequence is Small ribosomal subunit protein uS14 (61 aa).

The Zn(2+) site is built by Cys24, Cys27, Cys40, and Cys43.

It belongs to the universal ribosomal protein uS14 family. Zinc-binding uS14 subfamily. In terms of assembly, part of the 30S ribosomal subunit. Contacts proteins S3 and S10. Requires Zn(2+) as cofactor.

Binds 16S rRNA, required for the assembly of 30S particles and may also be responsible for determining the conformation of the 16S rRNA at the A site. The chain is Small ribosomal subunit protein uS14 from Desulfotalea psychrophila (strain LSv54 / DSM 12343).